An 885-amino-acid polypeptide reads, in one-letter code: Disease resistance protein RFL1 (885 aa).

Positions 27–61 form a coiled coil; the sequence is SYIQNLSENLASLQKAMGVLNAKRDDVQGRINREE. The NB-ARC domain maps to 141–443; it reads EAAPIAEVEE…CEGFIKEKQG (303 aa). 183-190 is a binding site for ATP; the sequence is GMGGVGKT. LRR repeat units lie at residues 517-538, 539-561, 564-586, 588-610, 611-633, 634-655, and 657-679; these read AVKR…PECV, ELIT…FFRC, SLAV…ISEL, SLQY…HELR, KLVH…SYLS, SLRT…MKEL, and LLEH…LFCY.

Belongs to the disease resistance NB-LRR family.

In terms of biological role, disease resistance (R) protein. In Arabidopsis thaliana (Mouse-ear cress), this protein is Disease resistance protein RFL1 (RFL1).